Here is a 163-residue protein sequence, read N- to C-terminus: Glutathione peroxidase-like peroxiredoxin HYR1 (163 aa).

C36 (cysteine sulfenic acid (-SOH) intermediate) is an active-site residue. A disulfide bridge connects residues C36 and C82.

Belongs to the glutathione peroxidase family. As to quaternary structure, interacts with YAP1 and probably YBP1.

It localises to the cytoplasm. The protein resides in the mitochondrion intermembrane space. The protein localises to the peroxisome matrix. The enzyme catalyses a hydroperoxide + [thioredoxin]-dithiol = an alcohol + [thioredoxin]-disulfide + H2O. In terms of biological role, involved in oxidative stress response and redox homeostasis. Functions as a sensor and transducer of hydroperoxide stress. In response to hydroperoxide stress it oxidizes (activates) the transcription activator YAP1, which is involved in transcription activation of genes of the oxidative stress response pathway. May also play a direct role in hydroperoxide scavenging, being the most active of three closely related S.cerevisiae peroxiredoxins (GPX1, GPX2, and HYR1/GPX3) with respect to peroxide and lipid hydroperoxide reduction. The three enzymes are not required for the glutaredoxin-mediated antioxidant function. In the presence of peroxides, HYR1/GPX3 is directly oxidized at Cys-36 to form a cysteine sulfenic acid (-SOH). Cys-36-SOH then forms either an intramolecular disulfide bond (Cys-36 with Cys-82) or a transient, intermolecular disulfide bond with 'Cys-598' of YAP1, which is further resolved into a YAP1 intramolecular disulfide bond ('Cys-303' with 'Cys-598'), which causes its nuclear accumulation and activation, and a reduced Cys-36 in HYR1/GPX3. The polypeptide is Glutathione peroxidase-like peroxiredoxin HYR1 (Saccharomyces cerevisiae (strain ATCC 204508 / S288c) (Baker's yeast)).